Reading from the N-terminus, the 429-residue chain is Glutamate-1-semialdehyde 2,1-aminomutase (429 aa).

At K267 the chain carries N6-(pyridoxal phosphate)lysine.

It belongs to the class-III pyridoxal-phosphate-dependent aminotransferase family. HemL subfamily. Homodimer. Pyridoxal 5'-phosphate is required as a cofactor.

The protein resides in the cytoplasm. The catalysed reaction is (S)-4-amino-5-oxopentanoate = 5-aminolevulinate. The protein operates within porphyrin-containing compound metabolism; protoporphyrin-IX biosynthesis; 5-aminolevulinate from L-glutamyl-tRNA(Glu): step 2/2. This Herpetosiphon aurantiacus (strain ATCC 23779 / DSM 785 / 114-95) protein is Glutamate-1-semialdehyde 2,1-aminomutase.